The primary structure comprises 138 residues: MTQMTVQVVTPDGIKYDHHAKCISVTTPDGEMGILPNHINLIAPLQVHEMKIRRGGEDEKVDWIAINGGIIEIKDNVVTIVADSAERDRDIDVSRAERAKLRAEREIAQAETTHNIDEVRRAKVALRRALNRINVSKK.

This sequence belongs to the ATPase epsilon chain family. F-type ATPases have 2 components, CF(1) - the catalytic core - and CF(0) - the membrane proton channel. CF(1) has five subunits: alpha(3), beta(3), gamma(1), delta(1), epsilon(1). CF(0) has three main subunits: a, b and c.

The protein resides in the cell membrane. Functionally, produces ATP from ADP in the presence of a proton gradient across the membrane. This Streptococcus pyogenes serotype M2 (strain MGAS10270) protein is ATP synthase epsilon chain.